The following is a 685-amino-acid chain: Allergen Cr-PI (685 aa).

Residues 1–16 form the signal peptide; that stretch reads MKTALVFAAVVAFVAA. The N-linked (GlcNAc...) asparagine glycan is linked to asparagine 233.

Belongs to the hemocyanin family.

The protein localises to the secreted. The protein resides in the extracellular space. Its function is as follows. Larval storage protein (LSP) which may serve as a store of amino acids for synthesis of adult proteins. This chain is Allergen Cr-PI, found in Periplaneta americana (American cockroach).